Here is a 199-residue protein sequence, read N- to C-terminus: Type-4 uracil-DNA glycosylase (199 aa).

Residues Cys-14 and Cys-17 each coordinate [4Fe-4S] cluster. Residues 41–43 (GEA), Phe-55, and Asn-81 contribute to the uracil site. The tract at residues 77 to 114 (VYITNVLKCRPPNNRDPTPEEVEKCGDYLVRQLEAIRP) is pseudo-FCL. The [4Fe-4S] cluster site is built by Cys-85 and Cys-101. His-163 contacts uracil.

This sequence belongs to the uracil-DNA glycosylase (UDG) superfamily. Type 4 (UDGa) family.

The catalysed reaction is Hydrolyzes single-stranded DNA or mismatched double-stranded DNA and polynucleotides, releasing free uracil.. With respect to regulation, product-inhibited by both uracil and apurinic/apyrimidinic sites. Its function is as follows. Removes uracil bases that are present in DNA as a result of either deamination of cytosine or misincorporation of dUMP instead of dTMP. Can remove uracil from double-stranded DNA containing either a U/G or U/A base pair as well as from single-stranded DNA. This is Type-4 uracil-DNA glycosylase from Archaeoglobus fulgidus (strain ATCC 49558 / DSM 4304 / JCM 9628 / NBRC 100126 / VC-16).